A 740-amino-acid chain; its full sequence is F-BAR and double SH3 domains protein 2 (740 aa).

The F-BAR domain maps to 8–282; the sequence is VKVTQELKNI…NSSKVVRDYN (275 aa). A disordered region spans residues 303–323; the sequence is PCDSDTSRQLESETGTTEEHS. Over residues 307-323 the composition is skewed to basic and acidic residues; the sequence is DTSRQLESETGTTEEHS. Positions 356 to 397 form a coiled coil; that stretch reads GAAVSEQSRAELEQKIDEARENIRKAEIIKLKAEARLDLLKQ. 2 consecutive SH3 domains span residues 469 to 530 and 567 to 629; these read NYPL…FPTS and ASVC…ELSA. Residues 567–629 form a required and sufficient for location at clathrin-coated pits region; sequence ASVCFVKALY…PSVLVEELSA (63 aa). The interval 633–740 is disordered; the sequence is GDTPWMREIQ…KIEDVEITLV (108 aa). Pro residues predominate over residues 646-657; the sequence is SPKPHASLPPLP. Phosphoserine is present on residues Ser675 and Ser681.

Homodimer. Interacts (via SH3 domain 2) with ITSN1 (via SH3 domain 4). Recruited to clathrin-coated pits during a mid-to-late stage of assembly via interaction with ITSN1. Interacts (via SH3 domain 1) with WASL. Interacts with WAS. Interacts with CASK and MAGI1. CASK inhibits interaction with MAGI1. Phosphorylated. Phosphorylation on a Ser residue is important for recruitment to the cell membrane and for its role in promoting endocytosis. As to expression, liver, brain, heart, placenta, skeletal muscle, pancreas, lung and kidney.

The protein localises to the cytoplasm. The protein resides in the cell junction. Its subcellular location is the membrane. It is found in the clathrin-coated pit. It localises to the cell membrane. The protein localises to the cell projection. The protein resides in the stereocilium. In terms of biological role, adapter protein that plays a role in endocytosis via clathrin-coated pits. Contributes to the internalization of cell surface receptors, such as integrin ITGB1 and transferrin receptor. Promotes endocytosis of EGFR in cancer cells, and thereby contributes to the down-regulation of EGFR signaling. Recruited to clathrin-coated pits during a mid-to-late stage of assembly, where it is required for normal progress from U-shaped intermediate stage pits to terminal, omega-shaped pits. Binds to membranes enriched in phosphatidylinositol 3,4-bisphosphate or phosphatidylinositol 3,4,5-trisphosphate. When bound to membranes, promotes actin polymerization via its interaction with WAS and/or WASL which leads to the activation of the Arp2/3 complex. Does not promote actin polymerisation in the absence of membranes. This Homo sapiens (Human) protein is F-BAR and double SH3 domains protein 2 (FCHSD2).